Reading from the N-terminus, the 295-residue chain is Mediator of RNA polymerase II transcription subunit 27 (295 aa).

It belongs to the Mediator complex subunit 27 family. As to quaternary structure, component of the Mediator complex.

The protein resides in the nucleus. In terms of biological role, component of the Mediator complex, a coactivator involved in the regulated transcription of nearly all RNA polymerase II-dependent genes. Mediator functions as a bridge to convey information from gene-specific regulatory proteins to the basal RNA polymerase II transcription machinery. Mediator is recruited to promoters by direct interactions with regulatory proteins and serves as a scaffold for the assembly of a functional preinitiation complex with RNA polymerase II and the general transcription factors. In Anopheles gambiae (African malaria mosquito), this protein is Mediator of RNA polymerase II transcription subunit 27 (MED27).